Reading from the N-terminus, the 342-residue chain is NADPH-dependent methylglyoxal reductase GRE2 (342 aa).

NADP(+) contacts are provided by residues G7 to I12, R32, K36, D57 to I58, Y165, K169, V199, and S216. The Proton donor role is filled by K169. Residue S333 is modified to Phosphoserine.

The protein belongs to the NAD(P)-dependent epimerase/dehydratase family. Dihydroflavonol-4-reductase subfamily. In terms of assembly, monomer. The N-terminus is blocked.

The protein localises to the cytoplasm. It is found in the nucleus. The enzyme catalyses (S)-lactaldehyde + NADP(+) = methylglyoxal + NADPH + H(+). It catalyses the reaction 3-methylbutanol + NADP(+) = 3-methylbutanal + NADPH + H(+). It carries out the reaction 2,5-hexanedione + 2 NADPH + 2 H(+) = (2S,5S)-hexanediol + 2 NADP(+). The catalysed reaction is (S)-3-chloro-1-phenyl-1-propanol + NADP(+) = 3-chloro-1-phenyl-1-propanone + NADPH + H(+). Its activity is regulated as follows. Activated by glutathione. In terms of biological role, catalyzes the irreversible reduction of the cytotoxic compound methylglyoxal (MG, 2-oxopropanal) to (S)-lactaldehyde as an alternative to detoxification of MG by glyoxalase I GLO1. MG is synthesized via a bypath of glycolysis from dihydroxyacetone phosphate and is believed to play a role in cell cycle regulation and stress adaptation. Also catalyzes the reduction of 3-methylbutanal to 3-methylbutanol. Acts as a suppressor of 3-methylbutanol-induced filamentation by modulating the levels of 3-methylbutanal, the signal to which cells respond by filamentation. Also involved in ergosterol metabolism. This chain is NADPH-dependent methylglyoxal reductase GRE2 (GRE2), found in Saccharomyces cerevisiae (strain ATCC 204508 / S288c) (Baker's yeast).